The following is a 467-amino-acid chain: 3-isopropylmalate dehydratase large subunit (467 aa).

Positions 347, 407, and 410 each coordinate [4Fe-4S] cluster.

Belongs to the aconitase/IPM isomerase family. LeuC type 1 subfamily. In terms of assembly, heterodimer of LeuC and LeuD. [4Fe-4S] cluster serves as cofactor.

It carries out the reaction (2R,3S)-3-isopropylmalate = (2S)-2-isopropylmalate. Its pathway is amino-acid biosynthesis; L-leucine biosynthesis; L-leucine from 3-methyl-2-oxobutanoate: step 2/4. Catalyzes the isomerization between 2-isopropylmalate and 3-isopropylmalate, via the formation of 2-isopropylmaleate. The sequence is that of 3-isopropylmalate dehydratase large subunit from Gloeothece citriformis (strain PCC 7424) (Cyanothece sp. (strain PCC 7424)).